The following is a 297-amino-acid chain: Formylmethanofuran--tetrahydromethanopterin formyltransferase (297 aa).

This sequence belongs to the FTR family. In terms of assembly, homotetramer.

It is found in the cytoplasm. It carries out the reaction N-formylmethanofuran + 5,6,7,8-tetrahydromethanopterin + H(+) = N(5)-formyl-5,6,7,8-tetrahydromethanopterin + methanofuran. It functions in the pathway one-carbon metabolism; methanogenesis from CO(2); 5,10-methenyl-5,6,7,8-tetrahydromethanopterin from CO(2): step 2/3. Its function is as follows. Catalyzes the reversible transfer of a formyl group from formylmethanofuran (formyl-MFR) to tetrahydromethanopterin (H(4)MPT) to produce 5-formyl tetrahydromethanopterin (5-formyl-H(4)MPT) and methanofuran (MFR). The protein is Formylmethanofuran--tetrahydromethanopterin formyltransferase of Methanosarcina mazei (strain ATCC BAA-159 / DSM 3647 / Goe1 / Go1 / JCM 11833 / OCM 88) (Methanosarcina frisia).